Here is a 636-residue protein sequence, read N- to C-terminus: Chaperone protein DnaK (636 aa).

T196 is modified (phosphothreonine; by autocatalysis). The interval 591 to 636 (LAEAMYKSSSQPGAQEAPPTDGQPKPDEKGKDNVVDAEFVDVDDKK) is disordered. Basic and acidic residues predominate over residues 614–624 (PKPDEKGKDNV).

This sequence belongs to the heat shock protein 70 family.

Functionally, acts as a chaperone. The polypeptide is Chaperone protein DnaK (Solibacter usitatus (strain Ellin6076)).